The chain runs to 150 residues: UPF0260 protein VIBHAR_03078 (150 aa).

Belongs to the UPF0260 family.

The sequence is that of UPF0260 protein VIBHAR_03078 from Vibrio campbellii (strain ATCC BAA-1116).